The following is a 358-amino-acid chain: Type II methyltransferase M.HpaII (358 aa).

An SAM-dependent MTase C5-type domain is found at 32-356; that stretch reads FTFIDLFAGI…KKILEKLGNL (325 aa). Cys103 is a catalytic residue.

Belongs to the class I-like SAM-binding methyltransferase superfamily. C5-methyltransferase family. Monomer.

The enzyme catalyses a 2'-deoxycytidine in DNA + S-adenosyl-L-methionine = a 5-methyl-2'-deoxycytidine in DNA + S-adenosyl-L-homocysteine + H(+). A methylase that recognizes the double-stranded sequence 5'-CCGG-3', methylates C-2 on both strands, and protects the DNA from cleavage by the HpaII endonuclease. This chain is Type II methyltransferase M.HpaII, found in Haemophilus parainfluenzae.